Reading from the N-terminus, the 99-residue chain is High mobility group nucleosome-binding domain-containing protein 3 (99 aa).

2 stretches are compositionally biased toward basic and acidic residues: residues 1-25 (MPKRKSPENTEGKDGTKLTKQEPTR) and 39-53 (PESKPRKTSAKKEPG). Residues 1-99 (MPKRKSPENT…RTESIEKEGE (99 aa)) form a disordered region. The residue at position 6 (serine 6) is a Phosphoserine. Threonine 10 is subject to Phosphothreonine. A phosphoserine mark is found at serine 78 and serine 93. The segment covering 83–99 (TKVEEAQRTESIEKEGE) has biased composition (basic and acidic residues).

It belongs to the HMGN family. As to quaternary structure, interacts with the ligand binding domain of the thyroid receptor (TR) (in vitro). Requires the presence of thyroid hormone for its interaction. Interacts with transcriptional regulator SEHBP. Interacts with nucleosomes. Expressed in the brain, eye, prostate, thyroid, kidney, testis, glial cells and insulin-producing cells of the Langerhans pancreatic islets. In the brain, expressed in the lateral olfactory tract, anterior commissure, corpus callosum, internal capsule, fornix, stria medullans, optic tract, axon bundles, Purkinje cell layer and granular layer of the cerebellum. In retina, expressed in the nuclei of cells in the inner nuclear layer including amacrine, bipolar and horizontal neurons and in the nuclei of ganglion neurons. Detected at low levels in the liver.

The protein localises to the nucleus. In terms of biological role, binds to nucleosomes, regulating chromatin structure and consequently, chromatin-dependent processes such as transcription, DNA replication and DNA repair. Affects both insulin and glucagon levels and modulates the expression of pancreatic genes involved in insulin secretion. Regulates the expression of the glucose transporter SLC2A2 by binding specifically to its promoter region and recruiting PDX1 and additional transcription factors. Regulates the expression of SLC6A9, a glycine transporter which regulates the glycine concentration in synaptic junctions in the central nervous system, by binding to its transcription start site. May play a role in ocular development and astrocyte function. The sequence is that of High mobility group nucleosome-binding domain-containing protein 3 (Hmgn3) from Mus musculus (Mouse).